A 241-amino-acid chain; its full sequence is Methylthioribulose-1-phosphate dehydratase (241 aa).

Residues 1 to 12 (MSQEITQKDNND) are compositionally biased toward basic and acidic residues. A disordered region spans residues 1 to 22 (MSQEITQKDNNDHLVQSSDPDH). Cysteine 101 provides a ligand contact to substrate. The Zn(2+) site is built by histidine 118 and histidine 120. Glutamate 147 functions as the Proton donor/acceptor in the catalytic mechanism. Histidine 203 is a binding site for Zn(2+).

Belongs to the aldolase class II family. MtnB subfamily. The cofactor is Zn(2+).

The protein resides in the cytoplasm. It carries out the reaction 5-(methylsulfanyl)-D-ribulose 1-phosphate = 5-methylsulfanyl-2,3-dioxopentyl phosphate + H2O. It functions in the pathway amino-acid biosynthesis; L-methionine biosynthesis via salvage pathway; L-methionine from S-methyl-5-thio-alpha-D-ribose 1-phosphate: step 2/6. Functionally, catalyzes the dehydration of methylthioribulose-1-phosphate (MTRu-1-P) into 2,3-diketo-5-methylthiopentyl-1-phosphate (DK-MTP-1-P). This chain is Methylthioribulose-1-phosphate dehydratase, found in Aspergillus terreus (strain NIH 2624 / FGSC A1156).